Reading from the N-terminus, the 423-residue chain is UPF0597 protein TTE0269 (423 aa).

This sequence belongs to the UPF0597 family.

This is UPF0597 protein TTE0269 from Caldanaerobacter subterraneus subsp. tengcongensis (strain DSM 15242 / JCM 11007 / NBRC 100824 / MB4) (Thermoanaerobacter tengcongensis).